A 124-amino-acid polypeptide reads, in one-letter code: Orexigenic neuropeptide QRFP (124 aa).

Residues 1 to 17 (MRGFRPLLSLLLPLSAC) form the signal peptide. The propeptide occupies 18–79 (FPLLDRRGPT…REHTGFRLGR (62 aa)). The disordered stretch occupies residues 63–101 (REQQASHREHTGFRLGRQDGSSEAAGFLPADSEKASGPL). Phe-122 carries the phenylalanine amide modification.

It belongs to the RFamide neuropeptide family. As to quaternary structure, ligand for the G-protein coupled receptor QRFPR/GPR103. As to expression, expressed in the brain with highest levels in the periventricular hypothalamic nucleus and lateral hypothalamic areas. Expressed at moderate levels in the adrenal gland, eye, heart, intestine, liver, lung, kidney, mesenteric lymph node, ovary, placenta, Peyer patches, skin, spleen, stomach, testis, thymus and uterus.

It is found in the secreted. Its function is as follows. Stimulates feeding and grooming behavior, metabolic rate and locomotor activity and increases blood pressure. May have orexigenic activity. May promote aldosterone secretion by the adrenal gland. The protein is Orexigenic neuropeptide QRFP of Mus musculus (Mouse).